A 143-amino-acid polypeptide reads, in one-letter code: Transcriptional regulator MraZ (143 aa).

SpoVT-AbrB domains follow at residues 5-47 (EYEH…PMPV) and 76-119 (ASDL…SAER).

The protein belongs to the MraZ family. Forms oligomers.

The protein localises to the cytoplasm. The protein resides in the nucleoid. The polypeptide is Transcriptional regulator MraZ (Herpetosiphon aurantiacus (strain ATCC 23779 / DSM 785 / 114-95)).